Consider the following 217-residue polypeptide: Adenylate kinase (217 aa).

Position 12–17 (12–17) interacts with ATP; that stretch reads GAGKGS. The segment at 32–61 is NMP; sequence STGDMFRTHIKGSTPLGLEAKKYTDQGLLV. AMP contacts are provided by residues T33, R38, 59–61, 87–90, and Q94; these read LLV and GYPR. An LID region spans residues 128–165; that stretch reads GRRTCPVCGAIYHVDNYPPKVAGICDNDGATLVQRKDD. Residue R129 participates in ATP binding. Residues C132 and C135 each coordinate Zn(2+). Residue 138 to 139 participates in ATP binding; sequence IY. C152 and D155 together coordinate Zn(2+). AMP contacts are provided by R162 and R173. Residue Q201 coordinates ATP.

This sequence belongs to the adenylate kinase family. As to quaternary structure, monomer.

Its subcellular location is the cytoplasm. It carries out the reaction AMP + ATP = 2 ADP. The protein operates within purine metabolism; AMP biosynthesis via salvage pathway; AMP from ADP: step 1/1. Catalyzes the reversible transfer of the terminal phosphate group between ATP and AMP. Plays an important role in cellular energy homeostasis and in adenine nucleotide metabolism. The chain is Adenylate kinase from Acholeplasma laidlawii (strain PG-8A).